Consider the following 97-residue polypeptide: Cytochrome c oxidase subunit 4 isoform 1, mitochondrial (97 aa).

The N-terminal 22 residues, 1–22 (MLATRVFNLIGRRAISTSVCVR), are a transit peptide targeting the mitochondrion. The residue at position 29 (Lys-29) is an N6-acetyllysine; alternate. Lys-29 is subject to N6-succinyllysine; alternate. The residue at position 53 (Lys-53) is an N6-acetyllysine. A phosphoserine mark is found at Ser-56 and Ser-58. Lys-60 bears the N6-acetyllysine; alternate mark. The residue at position 60 (Lys-60) is an N6-succinyllysine; alternate. Lys-67 bears the N6-acetyllysine mark.

It belongs to the cytochrome c oxidase IV family. Component of the cytochrome c oxidase (complex IV, CIV), a multisubunit enzyme composed of 14 subunits. The complex is composed of a catalytic core of 3 subunits MT-CO1, MT-CO2 and MT-CO3, encoded in the mitochondrial DNA, and 11 supernumerary subunits COX4I, COX5A, COX5B, COX6A, COX6B, COX6C, COX7A, COX7B, COX7C, COX8 and NDUFA4, which are encoded in the nuclear genome. The complex exists as a monomer or a dimer and forms supercomplexes (SCs) in the inner mitochondrial membrane with NADH-ubiquinone oxidoreductase (complex I, CI) and ubiquinol-cytochrome c oxidoreductase (cytochrome b-c1 complex, complex III, CIII), resulting in different assemblies (supercomplex SCI(1)III(2)IV(1) and megacomplex MCI(2)III(2)IV(2)). Interacts with PHB2; the interaction decreases in absence of SPHK2. Interacts with AFG1L. Interacts with ABCB7; this interaction allows the regulation of cellular iron homeostasis and cellular reactive oxygen species (ROS) levels in cardiomyocytes. Interacts with FLVCR2; this interaction occurs in the absence of heme and is disrupted upon heme binding. Interacts with IRGC.

The protein localises to the mitochondrion inner membrane. It functions in the pathway energy metabolism; oxidative phosphorylation. In terms of biological role, component of the cytochrome c oxidase, the last enzyme in the mitochondrial electron transport chain which drives oxidative phosphorylation. The respiratory chain contains 3 multisubunit complexes succinate dehydrogenase (complex II, CII), ubiquinol-cytochrome c oxidoreductase (cytochrome b-c1 complex, complex III, CIII) and cytochrome c oxidase (complex IV, CIV), that cooperate to transfer electrons derived from NADH and succinate to molecular oxygen, creating an electrochemical gradient over the inner membrane that drives transmembrane transport and the ATP synthase. Cytochrome c oxidase is the component of the respiratory chain that catalyzes the reduction of oxygen to water. Electrons originating from reduced cytochrome c in the intermembrane space (IMS) are transferred via the dinuclear copper A center (CU(A)) of subunit 2 and heme A of subunit 1 to the active site in subunit 1, a binuclear center (BNC) formed by heme A3 and copper B (CU(B)). The BNC reduces molecular oxygen to 2 water molecules using 4 electrons from cytochrome c in the IMS and 4 protons from the mitochondrial matrix. The protein is Cytochrome c oxidase subunit 4 isoform 1, mitochondrial (COX4I1) of Sus scrofa (Pig).